The following is a 317-amino-acid chain: Malate dehydrogenase (317 aa).

NAD(+) contacts are provided by residues 13 to 18 and Asp38; that span reads GAGNIG. Residues Arg87 and Arg93 each coordinate substrate. NAD(+)-binding positions include Asn100 and 123–125; that span reads VTN. Substrate-binding residues include Asn125 and Arg156. His180 functions as the Proton acceptor in the catalytic mechanism.

Belongs to the LDH/MDH superfamily. MDH type 3 family.

The enzyme catalyses (S)-malate + NAD(+) = oxaloacetate + NADH + H(+). Catalyzes the reversible oxidation of malate to oxaloacetate. This is Malate dehydrogenase from Anaplasma marginale (strain Florida).